We begin with the raw amino-acid sequence, 692 residues long: NADH-ubiquinone oxidoreductase chain 5 (692 aa).

17 helical membrane-spanning segments follow: residues 5–23, 30–52, 81–103, 112–129, 133–155, 168–190, 200–222, 243–262, 272–294, 301–319, 329–351, 364–386, 409–431, 452–471, 511–528, 535–557, and 615–637; these read IIIL…GRKV, ILGC…EVGF, LTVS…SIGY, RFFS…ILVT, YLLM…SFWF, FLTN…WSLG, LAPY…GAMA, VSAL…LLIR, TVLL…IGLF, IIAY…AIGL, LINH…HAVV, SFLP…FPFM, NVYF…VIYL, IFLS…FGYL, LLPF…IVYY, VVDF…RFLV, and YALY…SIFF.

The protein belongs to the complex I subunit 5 family.

The protein resides in the mitochondrion inner membrane. It catalyses the reaction a ubiquinone + NADH + 5 H(+)(in) = a ubiquinol + NAD(+) + 4 H(+)(out). In terms of biological role, core subunit of the mitochondrial membrane respiratory chain NADH dehydrogenase (Complex I) that is believed to belong to the minimal assembly required for catalysis. Complex I functions in the transfer of electrons from NADH to the respiratory chain. The immediate electron acceptor for the enzyme is believed to be ubiquinone. In Hypocrea jecorina (Trichoderma reesei), this protein is NADH-ubiquinone oxidoreductase chain 5 (nd5).